Here is a 168-residue protein sequence, read N- to C-terminus: Regulatory protein RecX (168 aa).

The protein belongs to the RecX family.

The protein resides in the cytoplasm. Its function is as follows. Modulates RecA activity. The chain is Regulatory protein RecX from Serratia proteamaculans (strain 568).